The sequence spans 259 residues: Oxaloacetate tautomerase FMP41, mitochondrial (259 aa).

Positions 87, 89, and 121 each coordinate Mg(2+).

This sequence belongs to the FAH family. Mg(2+) serves as cofactor. The cofactor is Mn(2+).

It localises to the mitochondrion. It carries out the reaction oxaloacetate = enol-oxaloacetate. Its function is as follows. Tautomerase that converts enol-oxaloacetate, a strong inhibitor of succinate dehydrogenase, to the physiological keto form of oxaloacetate. The chain is Oxaloacetate tautomerase FMP41, mitochondrial from Saccharomyces cerevisiae (strain ATCC 204508 / S288c) (Baker's yeast).